The following is a 269-amino-acid chain: 5'-nucleotidase SurE (269 aa).

A divalent metal cation is bound by residues aspartate 11, aspartate 12, serine 43, and asparagine 101.

Belongs to the SurE nucleotidase family. A divalent metal cation is required as a cofactor.

Its subcellular location is the cytoplasm. It catalyses the reaction a ribonucleoside 5'-phosphate + H2O = a ribonucleoside + phosphate. Nucleotidase that shows phosphatase activity on nucleoside 5'-monophosphates. The protein is 5'-nucleotidase SurE of Synechococcus sp. (strain WH7803).